The primary structure comprises 468 residues: ATP synthase subunit beta (468 aa).

155 to 162 (GGAGVGKT) contacts ATP.

It belongs to the ATPase alpha/beta chains family. As to quaternary structure, F-type ATPases have 2 components, CF(1) - the catalytic core - and CF(0) - the membrane proton channel. CF(1) has five subunits: alpha(3), beta(3), gamma(1), delta(1), epsilon(1). CF(0) has three main subunits: a(1), b(2) and c(9-12). The alpha and beta chains form an alternating ring which encloses part of the gamma chain. CF(1) is attached to CF(0) by a central stalk formed by the gamma and epsilon chains, while a peripheral stalk is formed by the delta and b chains.

Its subcellular location is the cell membrane. It carries out the reaction ATP + H2O + 4 H(+)(in) = ADP + phosphate + 5 H(+)(out). In terms of biological role, produces ATP from ADP in the presence of a proton gradient across the membrane. The catalytic sites are hosted primarily by the beta subunits. This chain is ATP synthase subunit beta, found in Streptococcus thermophilus (strain CNRZ 1066).